The sequence spans 449 residues: Endoglucanase A (449 aa).

Positions 1 to 31 (MSTRRTAAALLAAAAVAVGGLTALTTTAAQA) form a signal peptide, tat-type signal. In terms of domain architecture, CBM2 spans 32-137 (APGCRVDYAV…SLNGTTCTGT (106 aa)). Cysteines 35 and 134 form a disulfide. Residues 127–170 (FSLNGTTCTGTVPTTSPTPTPTPTTPTPTPTPTPTPTPTVTPQP) are disordered. The segment covering 132 to 141 (TTCTGTVPTT) has biased composition (low complexity). The linker ('hinge') (Pro-Thr box) stretch occupies residues 139–168 (PTTSPTPTPTPTTPTPTPTPTPTPTPTVTP). Residues 142–167 (SPTPTPTPTTPTPTPTPTPTPTPTVT) are compositionally biased toward pro residues. Residue D247 is part of the active site. Cystine bridges form between C248/C291 and C390/C426. D283 serves as the catalytic Proton donor. D423 acts as the Nucleophile in catalysis. Residues 438–449 (EIALEMARNARW) are catalytic.

The protein belongs to the glycosyl hydrolase 6 (cellulase B) family. The linker region (also termed 'hinge') may be a potential site for proteolysis. Post-translationally, predicted to be exported by the Tat system. The position of the signal peptide cleavage has not been experimentally proven.

It carries out the reaction Endohydrolysis of (1-&gt;4)-beta-D-glucosidic linkages in cellulose, lichenin and cereal beta-D-glucans.. The biological conversion of cellulose to glucose generally requires three types of hydrolytic enzymes: (1) Endoglucanases which cut internal beta-1,4-glucosidic bonds; (2) Exocellobiohydrolases that cut the disaccharide cellobiose from the non-reducing end of the cellulose polymer chain; (3) Beta-1,4-glucosidases which hydrolyze the cellobiose and other short cello-oligosaccharides to glucose. In Cellulomonas fimi, this protein is Endoglucanase A (cenA).